We begin with the raw amino-acid sequence, 248 residues long: Ras-like protein family member 11B (248 aa).

Residues 29-246 (AGRRLVKIAV…ALSAKVRTVT (218 aa)) form a small GTPase-like region. GTP is bound by residues 40–47 (GASGVGKT), 87–94 (DTPGIQVH), and 152–155 (NKAD). Residues 205 to 226 (QQPSSTPEKRRTSLIPRPKSPN) form a disordered region.

The protein belongs to the small GTPase superfamily. Ras family. In terms of tissue distribution, widely expressed with highest levels in placenta and primary macrophages.

The enzyme catalyses GTP + H2O = GDP + phosphate + H(+). The sequence is that of Ras-like protein family member 11B from Homo sapiens (Human).